The chain runs to 65 residues: Large ribosomal subunit protein bL35 (65 aa).

The segment at 28 to 53 (NGSHNLEKKNRKRTRRLHQSTMLDNA) is disordered. Residues 36-45 (KNRKRTRRLH) are compositionally biased toward basic residues.

The protein belongs to the bacterial ribosomal protein bL35 family.

The polypeptide is Large ribosomal subunit protein bL35 (Chlorobium luteolum (strain DSM 273 / BCRC 81028 / 2530) (Pelodictyon luteolum)).